The primary structure comprises 201 residues: Protease (201 aa).

Active-site residues include His56, Asp73, and Cys121.

Belongs to the peptidase C5 family. As to quaternary structure, interacts with protease cofactor pVI-C; this interaction is necessary for protease activation.

It localises to the virion. The protein resides in the host nucleus. The enzyme catalyses Cleaves proteins of the adenovirus and its host cell at two consensus sites: -Yaa-Xaa-Gly-Gly-|-Xaa- and -Yaa-Xaa-Gly-Xaa-|-Gly- (in which Yaa is Met, Ile or Leu, and Xaa is any amino acid).. Requires DNA and protease cofactor for maximal activation. Inside nascent virions, becomes partially activated by binding to the viral DNA, allowing it to cleave the cofactor that binds to the protease and fully activates it. Actin, like the viral protease cofactor, seems to act as a cofactor in the cleavage of cytokeratin 18 and of actin itself. In terms of biological role, cleaves viral precursor proteins (pTP, pIIIa, pVI, pVII, pVIII, and pX) inside newly assembled particles giving rise to mature virions. Protease complexed to its cofactor slides along the viral DNA to specifically locate and cleave the viral precursors. Mature virions have a weakened organization compared to the unmature virions, thereby facilitating subsequent uncoating. Without maturation, the particle lacks infectivity and is unable to uncoat. Late in adenovirus infection, in the cytoplasm, may participate in the cytoskeleton destruction. Cleaves host cell cytoskeletal keratins K7 and K18. The protein is Protease of Homo sapiens (Human).